Consider the following 344-residue polypeptide: uncharacterized protein (344 aa).

A signal peptide spans methionine 1–alanine 27. The region spanning glycine 29–lysine 344 is the GH18 domain. Glutamate 140 serves as the catalytic Proton donor.

Belongs to the glycosyl hydrolase 18 family.

This is an uncharacterized protein from Bacillus subtilis (strain 168).